Consider the following 129-residue polypeptide: C-phycocyanin beta subunit (129 aa).

The residue at position 62 (Asn-62) is an N4-methylasparagine. Cys-116 provides a ligand contact to (2R,3E)-phycocyanobilin.

The protein belongs to the phycobiliprotein family. As to quaternary structure, heterodimer of an alpha and a beta subunit, which further assembles into trimers and the trimers into hexamers. In terms of processing, two isomers exist. Contains two covalently linked bilin chromophores.

It is found in the cellular thylakoid membrane. Functionally, light-harvesting photosynthetic bile pigment-protein from the phycobiliprotein complex (phycobilisome, PBS). Phycocyanin is the major phycobiliprotein in the PBS rod. In Aphanizomenon flos-aquae, this protein is C-phycocyanin beta subunit.